Reading from the N-terminus, the 261-residue chain is Carbonic anhydrase 1 (261 aa).

The disordered stretch occupies residues 1 to 31; that stretch reads MASPDWGYDDKNGPEQWSKLYPIANGNNQSP. N-acetylalanine is present on alanine 2. The Alpha-carbonic anhydrase domain maps to 4–261; the sequence is PDWGYDDKNG…LKGRTVRASF (258 aa). Histidine 65 (proton donor/acceptor) is an active-site residue. Residues histidine 95, histidine 97, and histidine 120 each contribute to the Zn(2+) site. Residues threonine 200 and 200-201 contribute to the substrate site; that span reads TH. The tract at residues 240–261 is disordered; that stretch reads VPMQHNNRPTQPLKGRTVRASF.

It belongs to the alpha-carbonic anhydrase family. It depends on Zn(2+) as a cofactor.

Its subcellular location is the cytoplasm. The catalysed reaction is hydrogencarbonate + H(+) = CO2 + H2O. The enzyme catalyses urea = cyanamide + H2O. With respect to regulation, inhibited by acetazolamide. Its function is as follows. Catalyzes the reversible hydration of carbon dioxide. Can hydrate cyanamide to urea. The protein is Carbonic anhydrase 1 (CA1) of Gorilla gorilla gorilla (Western lowland gorilla).